A 312-amino-acid chain; its full sequence is Aspartoacylase (312 aa).

Residues His20 and Glu23 each coordinate Zn(2+). Arg62, Asn69, and Arg70 together coordinate N-acetyl-L-aspartate. His115 lines the Zn(2+) pocket. Tyr163 and Arg167 together coordinate N-acetyl-L-aspartate. Glu177 functions as the Proton donor/acceptor in the catalytic mechanism. Residue Tyr287 coordinates N-acetyl-L-aspartate.

It belongs to the AspA/AstE family. Aspartoacylase subfamily. In terms of assembly, homodimer. It depends on Zn(2+) as a cofactor. Detected in kidney proximal tubule cells (at protein level).

Its subcellular location is the cytoplasm. It is found in the nucleus. It carries out the reaction an N-acyl-L-aspartate + H2O = a carboxylate + L-aspartate. It catalyses the reaction N-acetyl-L-aspartate + H2O = L-aspartate + acetate. Functionally, catalyzes the deacetylation of N-acetylaspartic acid (NAA) to produce acetate and L-aspartate. NAA occurs in high concentration in brain and its hydrolysis NAA plays a significant part in the maintenance of intact white matter. In other tissues it acts as a scavenger of NAA from body fluids. The sequence is that of Aspartoacylase from Rattus norvegicus (Rat).